The following is a 110-amino-acid chain: Protein YcgL (110 aa).

The 85-residue stretch at 14–98 (MFCVIYRSSK…PPEDLLKQHL (85 aa)) folds into the YcgL domain. Residues 88-110 (PPPEDLLKQHLSSVGQNTSHADR) form a disordered region. Polar residues predominate over residues 97–110 (HLSSVGQNTSHADR).

This is Protein YcgL from Salmonella typhi.